The chain runs to 197 residues: ATP-dependent Clp protease proteolytic subunit (197 aa).

The active-site Nucleophile is Ser98. The active site involves His123.

The protein belongs to the peptidase S14 family. In terms of assembly, fourteen ClpP subunits assemble into 2 heptameric rings which stack back to back to give a disk-like structure with a central cavity, resembling the structure of eukaryotic proteasomes.

The protein resides in the cytoplasm. It catalyses the reaction Hydrolysis of proteins to small peptides in the presence of ATP and magnesium. alpha-casein is the usual test substrate. In the absence of ATP, only oligopeptides shorter than five residues are hydrolyzed (such as succinyl-Leu-Tyr-|-NHMec, and Leu-Tyr-Leu-|-Tyr-Trp, in which cleavage of the -Tyr-|-Leu- and -Tyr-|-Trp bonds also occurs).. Cleaves peptides in various proteins in a process that requires ATP hydrolysis. Has a chymotrypsin-like activity. Plays a major role in the degradation of misfolded proteins. This chain is ATP-dependent Clp protease proteolytic subunit, found in Limosilactobacillus reuteri (strain DSM 20016) (Lactobacillus reuteri).